Here is a 554-residue protein sequence, read N- to C-terminus: Hydroxylamine reductase (554 aa).

Residues Cys3, Cys6, Cys18, and Cys25 each coordinate [2Fe-2S] cluster. Hybrid [4Fe-2O-2S] cluster-binding residues include His252, Glu276, Cys320, Cys408, Cys436, Cys461, Glu495, and Lys497. Cys408 is subject to Cysteine persulfide.

This sequence belongs to the HCP family. Requires [2Fe-2S] cluster as cofactor. Hybrid [4Fe-2O-2S] cluster is required as a cofactor.

Its subcellular location is the cytoplasm. The enzyme catalyses A + NH4(+) + H2O = hydroxylamine + AH2 + H(+). Its function is as follows. Catalyzes the reduction of hydroxylamine to form NH(3) and H(2)O. This is Hydroxylamine reductase from Shewanella baltica (strain OS185).